The following is a 313-amino-acid chain: Olfactory receptor 8B3 (313 aa).

The Extracellular portion of the chain corresponds to 1–25; that stretch reads MLARNNSLVTEFILAGLTDHPEFQQ. The N-linked (GlcNAc...) asparagine glycan is linked to Asn-5. A helical membrane pass occupies residues 26-46; it reads PLFFLFLVVYIVTMVGNLGLI. Residues 47-54 are Cytoplasmic-facing; it reads ILFGLNSH. Residues 55–75 form a helical membrane-spanning segment; sequence LHTPMYYFLFNLSFIDLCYSS. The Extracellular portion of the chain corresponds to 76-99; it reads VFTPKMLMNFVSKKNIISYVGCMT. A disulfide bridge links Cys-97 with Cys-189. The chain crosses the membrane as a helical span at residues 100 to 120; it reads QLFFFLFFVISECYMLTSMAY. Over 121–139 the chain is Cytoplasmic; it reads DRYVAICNPLLYKVTMSHQ. A helical membrane pass occupies residues 140–160; the sequence is VCSMLTFAAYIMGLAGATAHT. Topologically, residues 161–197 are extracellular; the sequence is GCMLRLTFCSANIINHYLCDILPLLQLSCTSTYVNEV. Residues 198-217 form a helical membrane-spanning segment; that stretch reads VVLIVVGINIMVPSCTILIS. The Cytoplasmic segment spans residues 218–237; the sequence is YVFIVTSILHIKSTQGRSKA. Residues 238 to 258 traverse the membrane as a helical segment; that stretch reads FSTCSSHVIALSLFFGSAAFM. Topologically, residues 259–270 are extracellular; it reads YIKYSSGSMEQG. A helical transmembrane segment spans residues 271–291; the sequence is KVSSVFYTNVVPMLNPLIYSL. The Cytoplasmic segment spans residues 292 to 313; that stretch reads RNKDVKVALRKALIKIQRRNIF.

The protein belongs to the G-protein coupled receptor 1 family.

The protein localises to the cell membrane. In terms of biological role, odorant receptor. The sequence is that of Olfactory receptor 8B3 (OR8B3) from Homo sapiens (Human).